Consider the following 418-residue polypeptide: Putative ion-transport protein YfeO (418 aa).

A run of 12 helical transmembrane segments spans residues 10 to 30 (LLLS…LIVV), 54 to 74 (DSPF…GLVI), 99 to 119 (ALPG…SLGP), 120 to 140 (EHPI…RLLP), 149 to 169 (ILAS…AALI), 186 to 206 (LFAP…FFHP), 223 to 243 (ILSG…AVWC), 258 to 278 (VLML…AGPV), 300 to 320 (DYFL…ASGF), 322 to 342 (GGRI…LHEH), 343 to 363 (VPAV…VLVV), and 386 to 406 (LLCI…IMMV).

This sequence belongs to the chloride channel (TC 2.A.49) family.

Its subcellular location is the cell membrane. This Escherichia fergusonii (strain ATCC 35469 / DSM 13698 / CCUG 18766 / IAM 14443 / JCM 21226 / LMG 7866 / NBRC 102419 / NCTC 12128 / CDC 0568-73) protein is Putative ion-transport protein YfeO.